Consider the following 874-residue polypeptide: DNA mismatch repair protein MutS (874 aa).

An ATP-binding site is contributed by 630–637 (GPNMAGKS).

It belongs to the DNA mismatch repair MutS family.

Its function is as follows. This protein is involved in the repair of mismatches in DNA. It is possible that it carries out the mismatch recognition step. This protein has a weak ATPase activity. The protein is DNA mismatch repair protein MutS of Chlorobium phaeovibrioides (strain DSM 265 / 1930) (Prosthecochloris vibrioformis (strain DSM 265)).